A 71-amino-acid chain; its full sequence is Large ribosomal subunit protein uL29 (71 aa).

Positions 1–20 (MKARELQELRQGSSPQDLQE) are disordered.

This sequence belongs to the universal ribosomal protein uL29 family.

This Clostridium kluyveri (strain ATCC 8527 / DSM 555 / NBRC 12016 / NCIMB 10680 / K1) protein is Large ribosomal subunit protein uL29.